A 158-amino-acid polypeptide reads, in one-letter code: NAD(P)H-quinone oxidoreductase subunit N (158 aa).

It belongs to the complex I NdhN subunit family. As to quaternary structure, NDH-1 can be composed of about 15 different subunits; different subcomplexes with different compositions have been identified which probably have different functions.

It is found in the cellular thylakoid membrane. The catalysed reaction is a plastoquinone + NADH + (n+1) H(+)(in) = a plastoquinol + NAD(+) + n H(+)(out). It catalyses the reaction a plastoquinone + NADPH + (n+1) H(+)(in) = a plastoquinol + NADP(+) + n H(+)(out). NDH-1 shuttles electrons from an unknown electron donor, via FMN and iron-sulfur (Fe-S) centers, to quinones in the respiratory and/or the photosynthetic chain. The immediate electron acceptor for the enzyme in this species is believed to be plastoquinone. Couples the redox reaction to proton translocation, and thus conserves the redox energy in a proton gradient. Cyanobacterial NDH-1 also plays a role in inorganic carbon-concentration. The sequence is that of NAD(P)H-quinone oxidoreductase subunit N from Microcystis aeruginosa (strain NIES-843 / IAM M-2473).